Consider the following 419-residue polypeptide: 3-isopropylmalate dehydratase large subunit (419 aa).

Residues C300, C360, and C363 each contribute to the [4Fe-4S] cluster site.

This sequence belongs to the aconitase/IPM isomerase family. LeuC type 2 subfamily. As to quaternary structure, heterodimer of LeuC and LeuD. [4Fe-4S] cluster is required as a cofactor.

It carries out the reaction (2R,3S)-3-isopropylmalate = (2S)-2-isopropylmalate. The protein operates within amino-acid biosynthesis; L-leucine biosynthesis; L-leucine from 3-methyl-2-oxobutanoate: step 2/4. In terms of biological role, catalyzes the isomerization between 2-isopropylmalate and 3-isopropylmalate, via the formation of 2-isopropylmaleate. The polypeptide is 3-isopropylmalate dehydratase large subunit (Nitratidesulfovibrio vulgaris (strain DP4) (Desulfovibrio vulgaris)).